A 263-amino-acid chain; its full sequence is 3-methyl-2-oxobutanoate hydroxymethyltransferase (263 aa).

Mg(2+)-binding residues include D43 and D82. Residues D43–S44, D82, and K111 each bind 3-methyl-2-oxobutanoate. E113 is a binding site for Mg(2+). The active-site Proton acceptor is the E179.

The protein belongs to the PanB family. Homodecamer; pentamer of dimers. Mg(2+) is required as a cofactor.

It is found in the cytoplasm. The catalysed reaction is 3-methyl-2-oxobutanoate + (6R)-5,10-methylene-5,6,7,8-tetrahydrofolate + H2O = 2-dehydropantoate + (6S)-5,6,7,8-tetrahydrofolate. Its pathway is cofactor biosynthesis; (R)-pantothenate biosynthesis; (R)-pantoate from 3-methyl-2-oxobutanoate: step 1/2. In terms of biological role, catalyzes the reversible reaction in which hydroxymethyl group from 5,10-methylenetetrahydrofolate is transferred onto alpha-ketoisovalerate to form ketopantoate. The polypeptide is 3-methyl-2-oxobutanoate hydroxymethyltransferase (Neisseria gonorrhoeae (strain ATCC 700825 / FA 1090)).